We begin with the raw amino-acid sequence, 156 residues long: Large ribosomal subunit protein uL15 (156 aa).

Positions 25–48 are disordered; it reads RGIGCGKGKTSGRGHKGQKARSGV. Residues 34–43 are compositionally biased toward basic residues; that stretch reads TSGRGHKGQK.

It belongs to the universal ribosomal protein uL15 family. In terms of assembly, part of the 50S ribosomal subunit.

Its function is as follows. Binds to the 23S rRNA. The polypeptide is Large ribosomal subunit protein uL15 (Wolbachia pipientis wMel).